The primary structure comprises 389 residues: Large envelope protein (389 aa).

2 stretches are compositionally biased toward polar residues: residues 1-10 and 85-95; these read MGQNLSTSNP and STNRQTGRQPT. Disordered regions lie at residues 1–54 and 73–106; these read MGQN…AFGL and ILHT…DTHP. Residue Gly2 is the site of N-myristoyl glycine; by host attachment. The pre-S1 stretch occupies residues 2 to 108; sequence GQNLSTSNPL…PPLRDTHPQA (107 aa). The tract at residues 2 to 163 is pre-S; sequence GQNLSTSNPL…FSRIGDPVTN (162 aa). Residues 2-170 lie on the Virion surface; in external conformation side of the membrane; that stretch reads GQNLSTSNPL…VTNMENITSG (169 aa). Residues 2-242 are Intravirion; in internal conformation-facing; the sequence is GQNLSTSNPL…PGYRWMCLRG (241 aa). The segment at 109-163 is pre-S2; the sequence is VQWNSTTFHQTLQDPRVRGLYFPAGGSSSGTVNPVPTTASPLSSIFSRIGDPVTN. Residues 171 to 191 form a helical membrane-spanning segment; sequence FLGPLLVLQAGFFLLTRILTI. At 192 to 242 the chain is on the intravirion; in external conformation side; sequence PQSLDSWWTSLNFRGGTTVCLGQNSQSPTSNHSPTSCPPTCPGYRWMCLRG. A helical membrane pass occupies residues 243–263; it reads FIIFLFILLLCLIFLLVLLEY. The Virion surface portion of the chain corresponds to 264–337; that stretch reads QGMLHVCPLI…WASVRFSWLS (74 aa). Asn309 carries N-linked (GlcNAc...) asparagine; by host glycosylation. The chain crosses the membrane as a helical span at residues 338–358; sequence LLVPFVQWFVGLSPTVWLSAI. Over 359-364 the chain is Intravirion; the sequence is WMMWYW. A helical transmembrane segment spans residues 365–387; it reads GPSLYSILSPFLPLLPIFFCLWV. The Virion surface portion of the chain corresponds to 388 to 389; sequence YI.

The protein belongs to the orthohepadnavirus major surface antigen family. Li-HBsAg interacts with capsid protein and with HDV Large delta antigen. Isoform M associates with host chaperone CANX through its pre-S2 N glycan. This association may be essential for M proper secretion. Isoform M is N-terminally acetylated by host at a ratio of 90%, and N-glycosylated by host at the pre-S2 region. In terms of processing, myristoylated.

The protein resides in the virion membrane. Its function is as follows. The large envelope protein exists in two topological conformations, one which is termed 'external' or Le-HBsAg and the other 'internal' or Li-HBsAg. In its external conformation the protein attaches the virus to cell receptors and thereby initiating infection. This interaction determines the species specificity and liver tropism. This attachment induces virion internalization predominantly through caveolin-mediated endocytosis. The large envelope protein also assures fusion between virion membrane and endosomal membrane. In its internal conformation the protein plays a role in virion morphogenesis and mediates the contact with the nucleocapsid like a matrix protein. The middle envelope protein plays an important role in the budding of the virion. It is involved in the induction of budding in a nucleocapsid independent way. In this process the majority of envelope proteins bud to form subviral lipoprotein particles of 22 nm of diameter that do not contain a nucleocapsid. This is Large envelope protein from Homo sapiens (Human).